The primary structure comprises 293 residues: Hydroxyquinol 1,2-dioxygenase (293 aa).

Positions 164, 197, 221, and 223 each coordinate Fe cation.

The protein belongs to the intradiol ring-cleavage dioxygenase family. In terms of assembly, homodimer. It depends on Fe(3+) as a cofactor.

It catalyses the reaction benzene-1,2,4-triol + O2 = maleylacetate + 2 H(+). Its pathway is aromatic compound metabolism; beta-ketoadipate pathway; 3-oxoadipate from 3,4-dihydroxybenzoate: step 2/4. Its activity is regulated as follows. Inhibited by 3,5-dichlorocatechol, chlorohydroquinone and 4,5-dibromocatechol. Its function is as follows. Catalyzes the ortho-cleavage of the aromatic ring of hydroxyquinol. The polypeptide is Hydroxyquinol 1,2-dioxygenase (chqB) (Nocardioides simplex (Arthrobacter simplex)).